The chain runs to 474 residues: Protein anachronism (474 aa).

Residues 1–33 form the signal peptide; that stretch reads MASAMRGEKCERSRIRELVLILSLITMAGDSRA. N-linked (GlcNAc...) asparagine glycosylation is found at Asn-54, Asn-62, Asn-73, Asn-116, and Asn-144. The segment at 173-195 is disordered; that stretch reads NPGQTREHNPGQASTQPISTENP. Over residues 183–195 the composition is skewed to polar residues; that stretch reads GQASTQPISTENP. A glycan (N-linked (GlcNAc...) asparagine) is linked at Asn-342. Polar residues predominate over residues 359–372; sequence FIESTTSNSPTIDN. Residues 359-474 form a disordered region; sequence FIESTTSNSP…HHRIPAHKQE (116 aa). Basic residues-rich tracts occupy residues 390–400 and 437–474; these read LVHHRRHHHNH and NHHRHRTGHHHPHHQLHQHHHHHHRHTKHHRIPAHKQE.

In terms of tissue distribution, synthesized in some glial cells and secreted.

The protein resides in the secreted. Negatively regulates proliferation of neuronal precursor cells, thereby controlling the timing of postembryonic neurogenesis. In Drosophila melanogaster (Fruit fly), this protein is Protein anachronism (ana).